We begin with the raw amino-acid sequence, 776 residues long: Lysyl oxidase homolog 2 (776 aa).

A signal peptide spans 1-25 (MELHFGSCLSGCLALLVLLPSLSLA). SRCR domains are found at residues 61–162 (VRLA…VVCS), 191–305 (IRPI…VSCV), 329–428 (VRLR…VRCN), and 438–546 (VRLN…VACS). 9 disulfide bridges follow: cysteine 87–cysteine 151, cysteine 100–cysteine 161, cysteine 131–cysteine 141, cysteine 221–cysteine 294, cysteine 234–cysteine 304, cysteine 268–cysteine 278, cysteine 354–cysteine 417, cysteine 367–cysteine 427, and cysteine 398–cysteine 408. An N-linked (GlcNAc...) asparagine glycan is attached at asparagine 267. Residue asparagine 291 is glycosylated (N-linked (GlcNAc...) asparagine). The N-linked (GlcNAc...) asparagine glycan is linked to asparagine 458. Disulfide bonds link cysteine 467/cysteine 532, cysteine 480/cysteine 545, and cysteine 514/cysteine 524. Positions 550–753 (PDLVLNAEIV…WMYNCHVGGA (204 aa)) are lysyl-oxidase like. Ca(2+)-binding residues include aspartate 551 and leucine 552. 4 disulfides stabilise this stretch: cysteine 575–cysteine 627, cysteine 581–cysteine 697, cysteine 659–cysteine 675, and cysteine 665–cysteine 687. Residues histidine 628, histidine 630, and histidine 632 each contribute to the Cu cation site. N-linked (GlcNAc...) asparagine glycosylation is present at asparagine 646. The lysine tyrosylquinone (Lys-Tyr) cross-link spans 655 to 691 (KASFCLEDTECEGDIQKSYECANFGEQGITMGCWDMY). Tyrosine 691 is modified (2',4',5'-topaquinone). Positions 724, 726, 729, and 730 each coordinate Ca(2+). Cysteine 734 and cysteine 748 are joined by a disulfide.

It belongs to the lysyl oxidase family. As to quaternary structure, component of some chromatin repressor complex. Interacts with SNAI1. Interacts with TAF10. Interacts with HSPA5. Interacts with EFEMP2. It depends on Cu cation as a cofactor. The cofactor is lysine tyrosylquinone residue. The lysine tyrosylquinone cross-link (LTQ) is generated by condensation of the epsilon-amino group of a lysine with a topaquinone produced by oxidation of tyrosine. Post-translationally, N-glycosylated. N-glycosylation on Asn-458 and Asn-646 may be essential for proper folding and secretion; may be composed of a fucosylated carbohydrates attached to a trimannose N-linked glycan core. In terms of tissue distribution, ubiquitous. Highest expression in skin, lung and thymus. Present in chondrocytes: mainly expressed by chondrocytes in healing fractures and in epiphyseal growth plates (at protein level).

It is found in the secreted. The protein resides in the extracellular space. Its subcellular location is the extracellular matrix. It localises to the basement membrane. The protein localises to the nucleus. It is found in the chromosome. The protein resides in the endoplasmic reticulum. It carries out the reaction L-lysyl-[protein] + O2 + H2O = (S)-2-amino-6-oxohexanoyl-[protein] + H2O2 + NH4(+). With respect to regulation, specifically inhibited by a mouse monoclonal antibody AB0023, inhibition occurs in a non-competitive manner. Mediates the post-translational oxidative deamination of lysine residues on target proteins leading to the formation of deaminated lysine (allysine). Acts as a transcription corepressor and specifically mediates deamination of trimethylated 'Lys-4' of histone H3 (H3K4me3), a specific tag for epigenetic transcriptional activation. Shows no activity against histone H3 when it is trimethylated on 'Lys-9' (H3K9me3) or 'Lys-27' (H3K27me3) or when 'Lys-4' is monomethylated (H3K4me1) or dimethylated (H3K4me2). Also mediates deamination of methylated TAF10, a member of the transcription factor IID (TFIID) complex, which induces release of TAF10 from promoters, leading to inhibition of TFIID-dependent transcription. LOXL2-mediated deamination of TAF10 results in transcriptional repression of genes required for embryonic stem cell pluripotency including POU5F1/OCT4, NANOG, KLF4 and SOX2. Involved in epithelial to mesenchymal transition (EMT) via interaction with SNAI1 and participates in repression of E-cadherin, probably by mediating deamination of histone H3. During EMT, involved with SNAI1 in negatively regulating pericentromeric heterochromatin transcription. SNAI1 recruits LOXL2 to pericentromeric regions to oxidize histone H3 and repress transcription which leads to release of heterochromatin component CBX5/HP1A, enabling chromatin reorganization and acquisition of mesenchymal traits. Interacts with the endoplasmic reticulum protein HSPA5 which activates the IRE1-XBP1 pathway of the unfolded protein response, leading to expression of several transcription factors involved in EMT and subsequent EMT induction. When secreted into the extracellular matrix, promotes cross-linking of extracellular matrix proteins by mediating oxidative deamination of peptidyl lysine residues in precursors to fibrous collagen and elastin. Acts as a regulator of sprouting angiogenesis, probably via collagen IV scaffolding. Acts as a regulator of chondrocyte differentiation, probably by regulating expression of factors that control chondrocyte differentiation. The chain is Lysyl oxidase homolog 2 (Loxl2) from Mus musculus (Mouse).